A 580-amino-acid chain; its full sequence is uncharacterized protein (580 aa).

One can recognise a PE-PPE domain in the interval 300-525 (PGYTATFLET…LRVLVELGYD (226 aa)).

This sequence belongs to the mycobacterial PPE family.

This is an uncharacterized protein from Mycobacterium tuberculosis (strain CDC 1551 / Oshkosh).